We begin with the raw amino-acid sequence, 508 residues long: Aldehyde dehydrogenase family 7 member B4 (508 aa).

244–249 (GSSRVG) contacts NAD(+). Catalysis depends on Glu266, which acts as the Proton acceptor. The active-site Nucleophile is the Cys300.

This sequence belongs to the aldehyde dehydrogenase family. As to quaternary structure, homotetramer.

It catalyses the reaction an aldehyde + NAD(+) + H2O = a carboxylate + NADH + 2 H(+). This Arabidopsis thaliana (Mouse-ear cress) protein is Aldehyde dehydrogenase family 7 member B4 (ALDH7B4).